A 710-amino-acid chain; its full sequence is Chaperonin-containing T-complex member BBS12 (710 aa).

The protein belongs to the TCP-1 chaperonin family. BBS12 subfamily. As to quaternary structure, component of the chaperonin-containing T-complex (TRiC), a heterooligomeric complex of about 850 to 900 kDa that forms two stacked rings, 12 to 16 nm in diameter. Interacts with MKKS.

The protein localises to the cell projection. The protein resides in the cilium. Its function is as follows. Component of the chaperonin-containing T-complex (TRiC), a molecular chaperone complex that assists the folding of proteins upon ATP hydrolysis. As part of the TRiC complex may play a role in the assembly of BBSome, a complex involved in ciliogenesis regulating transports vesicles to the cilia. Involved in adipogenic differentiation. The polypeptide is Chaperonin-containing T-complex member BBS12 (BBS12) (Homo sapiens (Human)).